The sequence spans 194 residues: Imidazoleglycerol-phosphate dehydratase (194 aa).

The protein belongs to the imidazoleglycerol-phosphate dehydratase family.

The protein resides in the cytoplasm. It carries out the reaction D-erythro-1-(imidazol-4-yl)glycerol 3-phosphate = 3-(imidazol-4-yl)-2-oxopropyl phosphate + H2O. Its pathway is amino-acid biosynthesis; L-histidine biosynthesis; L-histidine from 5-phospho-alpha-D-ribose 1-diphosphate: step 6/9. This is Imidazoleglycerol-phosphate dehydratase from Clostridium kluyveri (strain NBRC 12016).